Consider the following 230-residue polypeptide: Nicotinamide riboside kinase (230 aa).

12-20 contributes to the ATP binding site; it reads GASCSGKST. Mg(2+)-binding residues include Ser19 and Asp38. Asp38 serves as the catalytic Proton acceptor. Residues 38–41 and 56–57 contribute to the substrate site; these read DDFY and WD. Position 153 (Arg153) interacts with ATP. Residues Arg154 and 159-160 each bind substrate; that span reads GY. Residues 157-159 and 203-205 contribute to the ATP site; these read RTG and RIQ.

It belongs to the uridine kinase family. NRK subfamily.

It catalyses the reaction beta-nicotinamide D-riboside + ATP = beta-nicotinamide D-ribonucleotide + ADP + H(+). The catalysed reaction is beta-D-ribosylnicotinate + ATP = nicotinate beta-D-ribonucleotide + ADP + H(+). Its pathway is cofactor biosynthesis; NAD(+) biosynthesis. Catalyzes the phosphorylation of nicotinamide riboside (NR) and nicotinic acid riboside (NaR) to form nicotinamide mononucleotide (NMN) and nicotinic acid mononucleotide (NaMN). This chain is Nicotinamide riboside kinase (nrk1), found in Schizosaccharomyces pombe (strain 972 / ATCC 24843) (Fission yeast).